The sequence spans 156 residues: UPF0225 protein PFLU_1319 (156 aa).

Belongs to the UPF0225 family.

This Pseudomonas fluorescens (strain SBW25) protein is UPF0225 protein PFLU_1319.